A 1188-amino-acid chain; its full sequence is MEYNEYEPEPQYVEDDDDEEITQEDAWAVISAYFEEKGLVRQQLDSFDEFIQNTMQEIVDESADIEIRPESQHNPGHQSDFAETIYKISFGQIYLSKPMMTESDGETATLFPKAARLRNLTYSAPLYVDVTKRVIKKGHDGEEVTETQDFTKVFIGKVPIMLRSSYCTLFQNSEKDLTELGECPYDQGGYFIINGSEKVLIAQEKMSTNHVYVFKKRQPNKYAYVGEVRSMAENQNRPPSTMFVRMLARASAKGGSSGQYIRCTLPYIRTEIPIIIVFRALGFVADKDILEHICYDFADTQMMELLRPSLEEAFVIQNQLVALDYIGKRGATVGVTKEKRIKYARDILQKEMLPHVGIGEHCETKKAYYFGYIIHRLLLCALGRRPEDDRDHYGNKRLDLAGPLLGGLFRMLFRKLTRDVRSYVQKCVDNGKEVNLQFAIKAKTITSGLKYSLATGNWGQANAAGTRAGVSQVLNRLTYASTLSHLRRLNSPIGREGKLAKPRQLHNSQWGMMCPAETPEGQACGLVKNLALMVYITVGSAAYPILEFLEEWGTENFEEISPSVIPQATKIFVNGMWVGVHRDPDMLVKTLRRLRRRVDVNTEVGVVRDIRLKELRIYTDYGRCSRPLFIVDNQKLLIKKRDIYALQQRESAEEDGWHHLVAKGFIEYIDTEEEETTMISMTISDLVQARLRPEEAYTENYTHCEIHPSLILGVCASIIPFPDHNQSPRNTYQSAMGKQAMGIYVTNYQFRMDTLAYVLYYPQKPLVTTRAMEHLHFRQLPAGINAIVAISCYSGYNQEDSVIMNQSSIDRGFFRSLFFRSYRDEEKKMGTLVKEDFGRPDRGSTMGMRHGSYDKLDDDGLAPPGTRVSGEDVIIGKTTPISQDEAQGQSSRYTRRDHSISLRHSETGMVDQVLLTTNADGLRFVKVRVRSVRIPQIGDKFSSRHGQKGTVGMTYTQEDMPWTIEGVTPDIIVNPHAIPSRMTIGQLIECIMGKVAAHMGKEGDATPFTDVTVDNISKALHKCGYQMRGFERMYNGHTGRPLTAMIFLGPTYYQRLKHMVDDKIHSRGRGPVQILTRQPAEGRSRDGGLRFGEMERDCMIAHGAAHFLKERLFDQSDAYRVHVCEVCGLIAIANLKKNSFECRGCKNKTDIVQVYIPYACKLLFQELMSMAIAPRMLTKHLKSAKGRQ.

Asp-800 lines the Mg(2+) pocket. 2 disordered regions span residues 852–871 and 877–897; these read SYDKLDDDGLAPPGTRVSGE and KTTPISQDEAQGQSSRYTRRD. Polar residues predominate over residues 879–892; the sequence is TPISQDEAQGQSSR. The Zn(2+) site is built by Cys-1124, Cys-1127, Cys-1142, and Cys-1145. A C4-type zinc finger spans residues 1124–1145; sequence CEVCGLIAIANLKKNSFECRGC.

It belongs to the RNA polymerase beta chain family. In terms of assembly, component of the RNA polymerase II complex consisting of at least 12 subunits.

It is found in the nucleus. It catalyses the reaction RNA(n) + a ribonucleoside 5'-triphosphate = RNA(n+1) + diphosphate. Functionally, DNA-dependent RNA polymerase catalyzes the transcription of DNA into RNA using the four ribonucleoside triphosphates as substrates. Second largest component of RNA polymerase II which synthesizes mRNA precursors and many functional non-coding RNAs. Proposed to contribute to the polymerase catalytic activity and forms the polymerase active center together with the largest subunit. Pol II is the central component of the basal RNA polymerase II transcription machinery. It is composed of mobile elements that move relative to each other. NRPB2 is part of the core element with the central large cleft, the clamp element that moves to open and close the cleft and the jaws that are thought to grab the incoming DNA template. In terms of biological role, essential for the completion of the three rounds of mitosis in female megaspores required for the development of mature gametophytes. The protein is DNA-directed RNA polymerase II subunit 2 (NRPB2) of Arabidopsis thaliana (Mouse-ear cress).